The chain runs to 642 residues: Threonine--tRNA ligase (642 aa).

The region spanning 1–61 is the TGS domain; sequence MPIITLPDGS…EQDSQLAIIT (61 aa). Positions 243 to 534 are catalytic; it reads DHRKIGKQLD…LTEEYAGFFP (292 aa). Zn(2+) contacts are provided by cysteine 334, histidine 385, and histidine 511.

The protein belongs to the class-II aminoacyl-tRNA synthetase family. In terms of assembly, homodimer. Zn(2+) is required as a cofactor.

The protein localises to the cytoplasm. The enzyme catalyses tRNA(Thr) + L-threonine + ATP = L-threonyl-tRNA(Thr) + AMP + diphosphate + H(+). Functionally, catalyzes the attachment of threonine to tRNA(Thr) in a two-step reaction: L-threonine is first activated by ATP to form Thr-AMP and then transferred to the acceptor end of tRNA(Thr). Also edits incorrectly charged L-seryl-tRNA(Thr). The sequence is that of Threonine--tRNA ligase from Proteus mirabilis (strain HI4320).